The following is an 88-amino-acid chain: MAHKKGASSSRNGRDSAAQRLGVKRFGGQVVKAGEILVRQRGTHFHPGVNVGRGGDDTLFALAPGAVEFGAKRGRKTVNIVPVARPEA.

The protein belongs to the bacterial ribosomal protein bL27 family.

This is Large ribosomal subunit protein bL27 from Mycolicibacterium smegmatis (strain ATCC 700084 / mc(2)155) (Mycobacterium smegmatis).